The chain runs to 187 residues: Elongation factor P (187 aa).

The protein belongs to the elongation factor P family.

Its subcellular location is the cytoplasm. It participates in protein biosynthesis; polypeptide chain elongation. In terms of biological role, involved in peptide bond synthesis. Stimulates efficient translation and peptide-bond synthesis on native or reconstituted 70S ribosomes in vitro. Probably functions indirectly by altering the affinity of the ribosome for aminoacyl-tRNA, thus increasing their reactivity as acceptors for peptidyl transferase. The sequence is that of Elongation factor P from Azobacteroides pseudotrichonymphae genomovar. CFP2.